A 126-amino-acid chain; its full sequence is S-adenosylmethionine decarboxylase proenzyme (126 aa).

Ser63 acts as the Schiff-base intermediate with substrate; via pyruvic acid in catalysis. Ser63 is modified (pyruvic acid (Ser); by autocatalysis). Residue His68 is the Proton acceptor; for processing activity of the active site. Cys83 (proton donor; for catalytic activity) is an active-site residue.

It belongs to the prokaryotic AdoMetDC family. Type 1 subfamily. As to quaternary structure, heterotetramer of two alpha and two beta chains arranged as a dimer of alpha/beta heterodimers. It depends on pyruvate as a cofactor. Is synthesized initially as an inactive proenzyme. Formation of the active enzyme involves a self-maturation process in which the active site pyruvoyl group is generated from an internal serine residue via an autocatalytic post-translational modification. Two non-identical subunits are generated from the proenzyme in this reaction, and the pyruvate is formed at the N-terminus of the alpha chain, which is derived from the carboxyl end of the proenzyme. The post-translation cleavage follows an unusual pathway, termed non-hydrolytic serinolysis, in which the side chain hydroxyl group of the serine supplies its oxygen atom to form the C-terminus of the beta chain, while the remainder of the serine residue undergoes an oxidative deamination to produce ammonia and the pyruvoyl group blocking the N-terminus of the alpha chain.

It carries out the reaction S-adenosyl-L-methionine + H(+) = S-adenosyl 3-(methylsulfanyl)propylamine + CO2. The protein operates within amine and polyamine biosynthesis; S-adenosylmethioninamine biosynthesis; S-adenosylmethioninamine from S-adenosyl-L-methionine: step 1/1. Catalyzes the decarboxylation of S-adenosylmethionine to S-adenosylmethioninamine (dcAdoMet), the propylamine donor required for the synthesis of the polyamines spermine and spermidine from the diamine putrescine. This is S-adenosylmethionine decarboxylase proenzyme from Syntrophomonas wolfei subsp. wolfei (strain DSM 2245B / Goettingen).